We begin with the raw amino-acid sequence, 128 residues long: Glycine cleavage system H protein (128 aa).

The region spanning 24–106 is the Lipoyl-binding domain; it reads LVRIGISEFA…HGEGWLLIIR (83 aa). Lys65 carries the N6-lipoyllysine modification.

It belongs to the GcvH family. The glycine cleavage system is composed of four proteins: P, T, L and H. (R)-lipoate is required as a cofactor.

In terms of biological role, the glycine cleavage system catalyzes the degradation of glycine. The H protein shuttles the methylamine group of glycine from the P protein to the T protein. The protein is Glycine cleavage system H protein of Prochlorococcus marinus (strain NATL1A).